The following is a 228-amino-acid chain: tRNA (guanine-N(1)-)-methyltransferase (228 aa).

S-adenosyl-L-methionine-binding positions include Gly-111 and 131-136; that span reads IGDFIL.

This sequence belongs to the RNA methyltransferase TrmD family. Homodimer.

It localises to the cytoplasm. It carries out the reaction guanosine(37) in tRNA + S-adenosyl-L-methionine = N(1)-methylguanosine(37) in tRNA + S-adenosyl-L-homocysteine + H(+). Its function is as follows. Specifically methylates guanosine-37 in various tRNAs. The sequence is that of tRNA (guanine-N(1)-)-methyltransferase from Pelagibacter ubique (strain HTCC1062).